Reading from the N-terminus, the 104-residue chain is Large ribosomal subunit protein bL21 (104 aa).

This sequence belongs to the bacterial ribosomal protein bL21 family. Part of the 50S ribosomal subunit. Contacts protein L20.

This protein binds to 23S rRNA in the presence of protein L20. This is Large ribosomal subunit protein bL21 from Francisella tularensis subsp. holarctica (strain FTNF002-00 / FTA).